The following is a 318-amino-acid chain: Methionyl-tRNA formyltransferase (318 aa).

112-115 contacts (6S)-5,6,7,8-tetrahydrofolate; sequence SILP.

The protein belongs to the Fmt family.

The enzyme catalyses L-methionyl-tRNA(fMet) + (6R)-10-formyltetrahydrofolate = N-formyl-L-methionyl-tRNA(fMet) + (6S)-5,6,7,8-tetrahydrofolate + H(+). Its function is as follows. Attaches a formyl group to the free amino group of methionyl-tRNA(fMet). The formyl group appears to play a dual role in the initiator identity of N-formylmethionyl-tRNA by promoting its recognition by IF2 and preventing the misappropriation of this tRNA by the elongation apparatus. This Shewanella sp. (strain MR-7) protein is Methionyl-tRNA formyltransferase.